Here is a 233-residue protein sequence, read N- to C-terminus: Octanoyltransferase (233 aa).

Residues 36–211 (DTTPDEIWLV…EFTRQLGYPT (176 aa)) form the BPL/LPL catalytic domain. Residues 75–82 (RGGQITYH), 142–144 (SLG), and 155–157 (GLA) each bind substrate. Residue cysteine 173 is the Acyl-thioester intermediate of the active site.

The protein belongs to the LipB family.

It is found in the cytoplasm. The catalysed reaction is octanoyl-[ACP] + L-lysyl-[protein] = N(6)-octanoyl-L-lysyl-[protein] + holo-[ACP] + H(+). It participates in protein modification; protein lipoylation via endogenous pathway; protein N(6)-(lipoyl)lysine from octanoyl-[acyl-carrier-protein]: step 1/2. Its function is as follows. Catalyzes the transfer of endogenously produced octanoic acid from octanoyl-acyl-carrier-protein onto the lipoyl domains of lipoate-dependent enzymes. Lipoyl-ACP can also act as a substrate although octanoyl-ACP is likely to be the physiological substrate. The sequence is that of Octanoyltransferase from Yersinia pseudotuberculosis serotype O:1b (strain IP 31758).